The following is a 209-amino-acid chain: DNA transformation protein TfoX1 (209 aa).

The protein belongs to the Sxy/TfoX family.

Functionally, required for DNA transformation jointly with TfoY (tfoX2). In Aliivibrio fischeri (strain ATCC 700601 / ES114) (Vibrio fischeri), this protein is DNA transformation protein TfoX1.